The chain runs to 530 residues: Cation transporter HKT2;1 (530 aa).

The Cytoplasmic portion of the chain corresponds to 1 to 40 (MTSIYHDFIHNKLQSFGRIGRYFVNFVVLAHRFIALHIHP). 2 consecutive transmembrane segments (helical) span residues 41–61 (FWIQ…LLMF) and 102–122 (IVVI…FLGL). The Cytoplasmic portion of the chain corresponds to 123 to 186 (MLRLNHKHNP…DLKRSKRLRW (64 aa)). Transmembrane regions (helical) follow at residues 187–207 (FLGF…FLLV) and 260–280 (GLLL…PLFL). Topologically, residues 281–317 (RLLIWFLGKVTKLRELKLMIKNPEELQYDYLLPKLPT) are cytoplasmic. The next 2 helical transmembrane spans lie at 318 to 338 (AFLA…FGAV) and 372 to 392 (IDCS…MYLP). Residues 393-418 (PSTTFALSNGDEKTANKKAKRKLGLV) lie on the Cytoplasmic side of the membrane. 2 consecutive transmembrane segments (helical) span residues 419-439 (VQNL…VAFI) and 494-514 (SLSG…MLYG). The Cytoplasmic segment spans residues 515-530 (RLKAFTKGTGEYWRLW).

The protein belongs to the TrkH potassium transport family. HKT (TC 2.A.38.3) subfamily. In terms of tissue distribution, expressed in epidermis and vascular tissue of endodermis in roots, and in cells surrounding the vasculature in leaves.

It is found in the membrane. The enzyme catalyses Na(+)(in) = Na(+)(out). Functionally, seems to be involved in regulation of potassium-sodium homeostasis. Seems to act as a high-affinity sodium transporter, which mediates increased sodium uptake in roots under potassium deficiency and contributes to sodium accumulation and salt toxicity. Involved in nutritional sodium uptake and distribution in potassium-starved roots to allow plant growth. May also act as a potassium transporter. Functions as a sodium-potassium cotransporter. The polypeptide is Cation transporter HKT2;1 (Oryza sativa subsp. indica (Rice)).